A 37-amino-acid chain; its full sequence is MKIRASVRQICDKCRLIRRRGRILVICYNPRHKQRQG.

This sequence belongs to the bacterial ribosomal protein bL36 family.

It is found in the plastid. In Cuscuta exaltata (Tall dodder), this protein is Large ribosomal subunit protein bL36c.